Reading from the N-terminus, the 225-residue chain is tRNA (guanine-N(7)-)-methyltransferase (225 aa).

Positions 56, 81, 108, and 131 each coordinate S-adenosyl-L-methionine. Residue D131 is part of the active site. Substrate-binding positions include K135, D167, and 204–207 (TKFE).

This sequence belongs to the class I-like SAM-binding methyltransferase superfamily. TrmB family.

It carries out the reaction guanosine(46) in tRNA + S-adenosyl-L-methionine = N(7)-methylguanosine(46) in tRNA + S-adenosyl-L-homocysteine. It participates in tRNA modification; N(7)-methylguanine-tRNA biosynthesis. Functionally, catalyzes the formation of N(7)-methylguanine at position 46 (m7G46) in tRNA. The polypeptide is tRNA (guanine-N(7)-)-methyltransferase (Legionella pneumophila (strain Lens)).